A 60-amino-acid polypeptide reads, in one-letter code: Large ribosomal subunit protein bL32 (60 aa).

Residues 1–20 (MAVQKSRKSRSRRDMRRSHH) show a composition bias toward basic residues. The interval 1–22 (MAVQKSRKSRSRRDMRRSHHRM) is disordered.

This sequence belongs to the bacterial ribosomal protein bL32 family.

This is Large ribosomal subunit protein bL32 from Psychrobacter arcticus (strain DSM 17307 / VKM B-2377 / 273-4).